We begin with the raw amino-acid sequence, 257 residues long: Pyridoxine 5'-phosphate synthase (257 aa).

Position 12 (N12) interacts with 3-amino-2-oxopropyl phosphate. 14-15 lines the 1-deoxy-D-xylulose 5-phosphate pocket; it reads DH. R23 serves as a coordination point for 3-amino-2-oxopropyl phosphate. Residue H48 is the Proton acceptor of the active site. The 1-deoxy-D-xylulose 5-phosphate site is built by R50 and H55. E75 acts as the Proton acceptor in catalysis. T105 provides a ligand contact to 1-deoxy-D-xylulose 5-phosphate. H199 functions as the Proton donor in the catalytic mechanism. 3-amino-2-oxopropyl phosphate-binding positions include G200 and 221–222; that span reads GH.

Belongs to the PNP synthase family. As to quaternary structure, homooctamer; tetramer of dimers.

The protein resides in the cytoplasm. The enzyme catalyses 3-amino-2-oxopropyl phosphate + 1-deoxy-D-xylulose 5-phosphate = pyridoxine 5'-phosphate + phosphate + 2 H2O + H(+). It participates in cofactor biosynthesis; pyridoxine 5'-phosphate biosynthesis; pyridoxine 5'-phosphate from D-erythrose 4-phosphate: step 5/5. In terms of biological role, catalyzes the complicated ring closure reaction between the two acyclic compounds 1-deoxy-D-xylulose-5-phosphate (DXP) and 3-amino-2-oxopropyl phosphate (1-amino-acetone-3-phosphate or AAP) to form pyridoxine 5'-phosphate (PNP) and inorganic phosphate. In Xanthobacter autotrophicus (strain ATCC BAA-1158 / Py2), this protein is Pyridoxine 5'-phosphate synthase.